A 650-amino-acid chain; its full sequence is Chaperone protein HtpG (650 aa).

The interval 1 to 344 (MSKHTHSFQA…SADLPLNVSR (344 aa)) is a; substrate-binding. Positions 345 to 582 (ELLQESRDVR…DGGMSTQLAR (238 aa)) are b. The segment at 583–650 (LLKQAGQSAP…YVKRVNALLA (68 aa)) is c.

Belongs to the heat shock protein 90 family. Homodimer.

Its subcellular location is the cytoplasm. In terms of biological role, molecular chaperone. Has ATPase activity. This is Chaperone protein HtpG from Acidovorax sp. (strain JS42).